Here is a 691-residue protein sequence, read N- to C-terminus: Germ cell nuclear acidic protein (691 aa).

The SUMO interaction motif 1 (SIM) signature appears at 22-25 (ILNV). The interval 25-488 (VQSSSDDTSG…GAAKVEKRKT (464 aa)) is disordered. Low complexity predominate over residues 27–36 (SSSDDTSGSS). Over residues 48–63 (CILNVQSRSGDTSGSS) the composition is skewed to polar residues. 3 consecutive short sequence motifs (SUMO interaction motif 1 (SIM)) follow at residues 76-79 (VVVI), 97-100 (LLEI), and 121-124 (IVIS). Basic and acidic residues predominate over residues 86-97 (ECHTHEEKKAKL). Positions 124–333 (SDDDNDDDNG…VPDDNSDDLE (210 aa)) are enriched in acidic residues. The span at 467 to 488 (GHKKRGPSKKKPGAAKVEKRKT) shows a compositional bias: basic residues. Residues 522–677 (VQRIYDLFNR…AKCKGSLVMV (156 aa)) form the SprT-like domain.

It belongs to the serine-aspartate repeat-containing protein (SDr) family. In terms of assembly, interacts (via SIM domains) with SUMO2; this interaction allows the GCNA recruitment to DPCs sites. Interacts with TOP2A; this interaction allows the resolution of topoisomerase II (TOP2A) DNA-protein cross-links. As to expression, expressed in germ cells of the testis (at protein level). Detected in skeletal muscle, liver, kidney, pancreas, heart, lung and brain. Expressed throughout spermatogenesis, from spermatogonia to elongated spermatids, in normal adult testis (at protein level).

The protein resides in the nucleus. It is found in the PML body. The protein localises to the chromosome. Its function is as follows. May play a role in DNA-protein cross-links (DPCs) clearance through a SUMO-dependent recruitment to sites of DPCs, ensuring the genomic stability by protecting germ cells and early embryos from various sources of damage. Can resolve the topoisomerase II (TOP2A) DPCs. The sequence is that of Germ cell nuclear acidic protein from Homo sapiens (Human).